A 579-amino-acid polypeptide reads, in one-letter code: Ribonucleoside-diphosphate reductase small chain (579 aa).

Positions 130, 160, and 163 each coordinate Fe cation. The active site involves tyrosine 167. Fe cation-binding residues include glutamate 225, glutamate 258, and histidine 261. In terms of domain architecture, Fido spans 435–579 (DMTWTLKDVH…VSVFVDQFYR (145 aa)).

This sequence belongs to the ribonucleoside diphosphate reductase small chain family. Heterotetramer composed of a homodimer of the large subunit (R1) and a homodimer of the small subunit (R2). Larger multisubunit protein complex are also active, composed of (R1)n(R2)n. Fe cation serves as cofactor.

The enzyme catalyses a 2'-deoxyribonucleoside 5'-diphosphate + [thioredoxin]-disulfide + H2O = a ribonucleoside 5'-diphosphate + [thioredoxin]-dithiol. Ribonucleoside-diphosphate reductase holoenzyme provides the precursors necessary for viral DNA synthesis. Allows virus growth in non-dividing cells. Catalyzes the biosynthesis of deoxyribonucleotides from the corresponding ribonucleotides. The sequence is that of Ribonucleoside-diphosphate reductase small chain from Magallana gigas (Pacific oyster).